Consider the following 237-residue polypeptide: uncharacterized protein (237 aa).

In terms of domain architecture, N-acetyltransferase spans 119-237; it reads VTVRRLTPTD…PAGLDGGLPA (119 aa).

This is an uncharacterized protein from Streptomyces virginiae (Streptomyces cinnamonensis).